We begin with the raw amino-acid sequence, 335 residues long: 3-hydroxyproline 2-epimerase (335 aa).

The active-site Proton acceptor is the C91. Residues 92–93 (GH), D251, and 256–257 (GS) contribute to the substrate site.

It belongs to the proline racemase family.

It catalyses the reaction trans-3-hydroxy-L-proline = cis-3-hydroxy-D-proline. It carries out the reaction trans-4-hydroxy-L-proline = cis-4-hydroxy-D-proline. In terms of biological role, catalyzes the epimerization of trans-3-hydroxy-L-proline (t3LHyp) to cis-3-hydroxy-D-proline (c3DHyp) in vitro. Can also catalyze the epimerization of trans-4-hydroxy-L-proline (t3LHyp) to cis-4-hydroxy-D-proline (c4DHyp), albeit with 3.6-fold lower efficiency. Displays no proline racemase activity. The protein is 3-hydroxyproline 2-epimerase of Burkholderia multivorans (strain ATCC 17616 / 249).